The sequence spans 566 residues: Putative pentatricopeptide repeat-containing protein At1g28020 (566 aa).

PPR repeat units lie at residues 136–171, 172–206, 207–242, 243–273, 279–309, 314–348, 349–385, 468–504, and 505–540; these read GDSV…GLLL, RPVP…DVEA, DNVT…GIKL, EWHT…TEQL, LKSA…YKSK, DNNG…PLEF, DHRI…RMNK, DYSV…NVDP, and DLIT…GIKL.

Belongs to the PPR family. P subfamily.

In Arabidopsis thaliana (Mouse-ear cress), this protein is Putative pentatricopeptide repeat-containing protein At1g28020.